The chain runs to 124 residues: MKRIIKKDQSSVINYINDQKLLHLAIRAGYKNIVEYLLKKGANPNIQNNNGETTLHFAAMNGCVRTIECLIKSGAIIDSFDKFERTPLELAINSGNTDAVKLFLQYEATIGNTLNQYLNILVKN.

ANK repeat units follow at residues 17–46 (NDQK…NPNI), 50–79 (NGET…IIDS), and 83–112 (FERT…TIGN).

The protein is Putative ankyrin repeat protein RF_1087 of Rickettsia felis (strain ATCC VR-1525 / URRWXCal2) (Rickettsia azadi).